The primary structure comprises 207 residues: Small ribosomal subunit protein uS4 (207 aa).

One can recognise an S4 RNA-binding domain in the interval 96 to 156 (SRLDNVVYRM…KKSHNQSRIY (61 aa)).

This sequence belongs to the universal ribosomal protein uS4 family. Part of the 30S ribosomal subunit. Contacts protein S5. The interaction surface between S4 and S5 is involved in control of translational fidelity.

One of the primary rRNA binding proteins, it binds directly to 16S rRNA where it nucleates assembly of the body of the 30S subunit. Functionally, with S5 and S12 plays an important role in translational accuracy. In Blochmanniella floridana, this protein is Small ribosomal subunit protein uS4.